The primary structure comprises 959 residues: Isoleucine--tRNA ligase (959 aa).

The 'HIGH' region signature appears at 60–70 (PYANGSLHIGH). E571 lines the L-isoleucyl-5'-AMP pocket. The 'KMSKS' region signature appears at 612-616 (KMSKS). Position 615 (K615) interacts with ATP. Zn(2+) is bound by residues C928, C931, C948, and C951.

Belongs to the class-I aminoacyl-tRNA synthetase family. IleS type 1 subfamily. Monomer. The cofactor is Zn(2+).

It localises to the cytoplasm. It catalyses the reaction tRNA(Ile) + L-isoleucine + ATP = L-isoleucyl-tRNA(Ile) + AMP + diphosphate. In terms of biological role, catalyzes the attachment of isoleucine to tRNA(Ile). As IleRS can inadvertently accommodate and process structurally similar amino acids such as valine, to avoid such errors it has two additional distinct tRNA(Ile)-dependent editing activities. One activity is designated as 'pretransfer' editing and involves the hydrolysis of activated Val-AMP. The other activity is designated 'posttransfer' editing and involves deacylation of mischarged Val-tRNA(Ile). This chain is Isoleucine--tRNA ligase, found in Nostoc punctiforme (strain ATCC 29133 / PCC 73102).